A 520-amino-acid chain; its full sequence is D-aminopeptidase (520 aa).

Catalysis depends on Ser62, which acts as the Nucleophile. Lys65 (proton donor/acceptor) is an active-site residue. The interval 477–487 is important for specificity; it reads QRSMDAPSPGE. Substrate is bound at residue Asp481.

This sequence belongs to the peptidase S12 family. Homodimer.

The catalysed reaction is Release of an N-terminal D-amino acid from a peptide, Xaa-|-Yaa-, in which Xaa is preferably D-Ala, D-Ser or D-Thr. D-amino acid amides and methyl esters also are hydrolyzed, as is glycine amide.. Inhibited by beta-lactam compounds such as 6-aminopenicillic acid, 7-aminocephalosporanic acid, benzylpenicillin and ampicillin. Inhibited by p-chloromercuribenzoate. In terms of biological role, hydrolyzes N-terminal residues in D-amino acid-containing peptides. The polypeptide is D-aminopeptidase (dap) (Brucella anthropi (Ochrobactrum anthropi)).